Here is a 426-residue protein sequence, read N- to C-terminus: Glutamate-1-semialdehyde 2,1-aminomutase (426 aa).

Residue Lys-265 is modified to N6-(pyridoxal phosphate)lysine.

This sequence belongs to the class-III pyridoxal-phosphate-dependent aminotransferase family. HemL subfamily. Homodimer. Pyridoxal 5'-phosphate serves as cofactor.

Its subcellular location is the cytoplasm. The catalysed reaction is (S)-4-amino-5-oxopentanoate = 5-aminolevulinate. The protein operates within porphyrin-containing compound metabolism; protoporphyrin-IX biosynthesis; 5-aminolevulinate from L-glutamyl-tRNA(Glu): step 2/2. The chain is Glutamate-1-semialdehyde 2,1-aminomutase from Escherichia coli (strain K12 / DH10B).